A 95-amino-acid polypeptide reads, in one-letter code: Protein TusB (95 aa).

The protein belongs to the DsrH/TusB family. In terms of assembly, heterohexamer, formed by a dimer of trimers. The hexameric TusBCD complex contains 2 copies each of TusB, TusC and TusD. The TusBCD complex interacts with TusE.

It localises to the cytoplasm. In terms of biological role, part of a sulfur-relay system required for 2-thiolation of 5-methylaminomethyl-2-thiouridine (mnm(5)s(2)U) at tRNA wobble positions. The protein is Protein TusB of Escherichia coli (strain SMS-3-5 / SECEC).